A 173-amino-acid chain; its full sequence is Macro domain-containing protein in gbd 3'region (173 aa).

The Macro domain maps to 1–173 (MSGEHLQVVH…NYRLYRERLS (173 aa)).

Belongs to the MacroD-type family.

This Cupriavidus necator (Alcaligenes eutrophus) protein is Macro domain-containing protein in gbd 3'region.